Here is a 103-residue protein sequence, read N- to C-terminus: Small ribosomal subunit protein uS10 (103 aa).

It belongs to the universal ribosomal protein uS10 family. As to quaternary structure, part of the 30S ribosomal subunit.

Functionally, involved in the binding of tRNA to the ribosomes. In Stenotrophomonas maltophilia (strain R551-3), this protein is Small ribosomal subunit protein uS10.